We begin with the raw amino-acid sequence, 70 residues long: Protein SlyX homolog (70 aa).

Belongs to the SlyX family.

The polypeptide is Protein SlyX homolog (Shewanella woodyi (strain ATCC 51908 / MS32)).